The primary structure comprises 131 residues: Small ribosomal subunit protein uS8 (131 aa).

It belongs to the universal ribosomal protein uS8 family. As to quaternary structure, part of the 30S ribosomal subunit. Contacts proteins S5 and S12.

Functionally, one of the primary rRNA binding proteins, it binds directly to 16S rRNA central domain where it helps coordinate assembly of the platform of the 30S subunit. The protein is Small ribosomal subunit protein uS8 of Chlorobium chlorochromatii (strain CaD3).